The sequence spans 805 residues: Na(+)/H(+) antiporter subunit A1 (805 aa).

20 helical membrane-spanning segments follow: residues 1–21, 30–50, 79–99, 117–137, 166–186, 201–221, 226–246, 265–285, 300–320, 337–357, 377–397, 427–447, 480–500, 531–551, 591–611, 623–643, 646–666, 671–691, 707–727, and 766–786; these read MSLL…IPFV, LGWF…SYIS, LGLL…LYSI, LFMG…LYLF, MLVT…LSIA, EIQT…GAMT, FPFY…SAYL, IFAV…ITLF, ILAF…GVGA, FTAA…LFMI, LTIM…MAGI, LGIL…VYSI, ILAI…GSII, LGIY…IYLL, LVII…VTPF, PFEL…IFAK, LFSI…FIFF, LALT…LCFY, LVNI…GLIA, and TLFE…MIKL.

The protein belongs to the CPA3 antiporters (TC 2.A.63) subunit A family. As to quaternary structure, may form a heterooligomeric complex that consists of seven subunits: mnhA1, mnhB1, mnhC1, mnhD1, mnhE1, mnhF1 and mnhG1.

The protein localises to the cell membrane. Its function is as follows. Mnh complex is a Na(+)/H(+) antiporter involved in Na(+) excretion. The protein is Na(+)/H(+) antiporter subunit A1 (mnhA1) of Staphylococcus saprophyticus subsp. saprophyticus (strain ATCC 15305 / DSM 20229 / NCIMB 8711 / NCTC 7292 / S-41).